Consider the following 670-residue polypeptide: tRNA 5-methylaminomethyl-2-thiouridine biosynthesis bifunctional protein MnmC (670 aa).

A tRNA (mnm(5)s(2)U34)-methyltransferase region spans residues 1–242 (MTFSVQHAEI…KRECLSGLKI (242 aa)). The tract at residues 269-670 (IGGGIASLCA…KKWLKGSKVE (402 aa)) is FAD-dependent cmnm(5)s(2)U34 oxidoreductase.

In the N-terminal section; belongs to the methyltransferase superfamily. tRNA (mnm(5)s(2)U34)-methyltransferase family. The protein in the C-terminal section; belongs to the DAO family. The cofactor is FAD.

It is found in the cytoplasm. It carries out the reaction 5-aminomethyl-2-thiouridine(34) in tRNA + S-adenosyl-L-methionine = 5-methylaminomethyl-2-thiouridine(34) in tRNA + S-adenosyl-L-homocysteine + H(+). In terms of biological role, catalyzes the last two steps in the biosynthesis of 5-methylaminomethyl-2-thiouridine (mnm(5)s(2)U) at the wobble position (U34) in tRNA. Catalyzes the FAD-dependent demodification of cmnm(5)s(2)U34 to nm(5)s(2)U34, followed by the transfer of a methyl group from S-adenosyl-L-methionine to nm(5)s(2)U34, to form mnm(5)s(2)U34. This Haemophilus influenzae (strain ATCC 51907 / DSM 11121 / KW20 / Rd) protein is tRNA 5-methylaminomethyl-2-thiouridine biosynthesis bifunctional protein MnmC.